The sequence spans 375 residues: Protein SSUH2 homolog (375 aa).

In terms of tissue distribution, expressed in enterocytes of small and large intestinal mucosa (at protein level). Expressed in chromaffine and interstitial cells. Expressed in peripheral blood and gingival cells.

It localises to the cytoplasm. It is found in the nucleus. Its function is as follows. Plays a role in odontogenesis. This chain is Protein SSUH2 homolog, found in Homo sapiens (Human).